Reading from the N-terminus, the 138-residue chain is Protein FAM136A (138 aa).

At Ala2 the chain carries N-acetylalanine. Phosphothreonine occurs at positions 124 and 126.

This sequence belongs to the FAM136 family.

The sequence is that of Protein FAM136A (Fam136a) from Mus musculus (Mouse).